Reading from the N-terminus, the 344-residue chain is Adenosine deaminase (344 aa).

The Zn(2+) site is built by histidine 14 and histidine 16. Substrate contacts are provided by histidine 16, aspartate 18, and glycine 177. Residue histidine 204 coordinates Zn(2+). Glutamate 207 serves as the catalytic Proton donor. Aspartate 284 provides a ligand contact to Zn(2+).

Belongs to the metallo-dependent hydrolases superfamily. Adenosine and AMP deaminases family. Adenosine deaminase subfamily. It depends on Zn(2+) as a cofactor.

The enzyme catalyses adenosine + H2O + H(+) = inosine + NH4(+). The catalysed reaction is 2'-deoxyadenosine + H2O + H(+) = 2'-deoxyinosine + NH4(+). Catalyzes the hydrolytic deamination of adenosine and 2-deoxyadenosine. This chain is Adenosine deaminase, found in Haemophilus ducreyi (strain 35000HP / ATCC 700724).